We begin with the raw amino-acid sequence, 483 residues long: Homoserine O-acetyltransferase (483 aa).

Positions 47–346 (NVILICHALT…HFGHDAFLLE (300 aa)) constitute an AB hydrolase-1 domain. Ser-152 (nucleophile) is an active-site residue. Arg-221 is a substrate binding site. Active-site residues include Asp-307 and His-340. Residue Asp-341 coordinates substrate. CBS domains are found at residues 367–423 (MSED…KISS) and 428–483 (LSRD…KGTK).

Belongs to the AB hydrolase superfamily. MetX family. Homodimer.

The protein resides in the cytoplasm. The enzyme catalyses L-homoserine + acetyl-CoA = O-acetyl-L-homoserine + CoA. It participates in amino-acid biosynthesis; L-methionine biosynthesis via de novo pathway; O-acetyl-L-homoserine from L-homoserine: step 1/1. In terms of biological role, transfers an acetyl group from acetyl-CoA to L-homoserine, forming acetyl-L-homoserine. The sequence is that of Homoserine O-acetyltransferase from Methanohalophilus mahii (strain ATCC 35705 / DSM 5219 / SLP).